A 161-amino-acid polypeptide reads, in one-letter code: Large ribosomal subunit protein bL9 (161 aa).

It belongs to the bacterial ribosomal protein bL9 family.

Its function is as follows. Binds to the 23S rRNA. The polypeptide is Large ribosomal subunit protein bL9 (Blochmanniella floridana).